The following is a 430-amino-acid chain: Protein translocase subunit SecY (430 aa).

A run of 10 helical transmembrane segments spans residues 18 to 38, 68 to 88, 117 to 137, 148 to 168, 179 to 199, 215 to 235, 270 to 290, 308 to 328, 368 to 388, and 390 to 410; these read IFFT…PAPG, FSIF…MQLL, FAII…NNYL, MSYL…LWLG, GISI…LIQF, LQVA…VYVL, VIPV…TMFF, NIGM…YAFV, FVGS…TKFM, and LPQS…VAIE.

The protein belongs to the SecY/SEC61-alpha family. In terms of assembly, component of the Sec protein translocase complex. Heterotrimer consisting of SecY, SecE and SecG subunits. The heterotrimers can form oligomers, although 1 heterotrimer is thought to be able to translocate proteins. Interacts with the ribosome. Interacts with SecDF, and other proteins may be involved. Interacts with SecA.

It localises to the cell membrane. In terms of biological role, the central subunit of the protein translocation channel SecYEG. Consists of two halves formed by TMs 1-5 and 6-10. These two domains form a lateral gate at the front which open onto the bilayer between TMs 2 and 7, and are clamped together by SecE at the back. The channel is closed by both a pore ring composed of hydrophobic SecY resides and a short helix (helix 2A) on the extracellular side of the membrane which forms a plug. The plug probably moves laterally to allow the channel to open. The ring and the pore may move independently. The chain is Protein translocase subunit SecY from Staphylococcus carnosus (strain TM300).